The following is a 65-amino-acid chain: uncharacterized protein (65 aa).

This is an uncharacterized protein from Archaeoglobus fulgidus (strain ATCC 49558 / DSM 4304 / JCM 9628 / NBRC 100126 / VC-16).